The chain runs to 115 residues: NADH-ubiquinone oxidoreductase chain 3 (115 aa).

3 helical membrane passes run 3–23, 55–75, and 86–106; these read LILTLLINTLLSSVLVLIAFW, FFLVAITFLLFDLEIALLLPL, and TMLTMALILISLLAASLAYEW.

This sequence belongs to the complex I subunit 3 family. As to quaternary structure, core subunit of respiratory chain NADH dehydrogenase (Complex I) which is composed of 45 different subunits. Interacts with TMEM186. Interacts with TMEM242.

Its subcellular location is the mitochondrion inner membrane. The enzyme catalyses a ubiquinone + NADH + 5 H(+)(in) = a ubiquinol + NAD(+) + 4 H(+)(out). In terms of biological role, core subunit of the mitochondrial membrane respiratory chain NADH dehydrogenase (Complex I) which catalyzes electron transfer from NADH through the respiratory chain, using ubiquinone as an electron acceptor. Essential for the catalytic activity of complex I. This Rhinoceros unicornis (Greater Indian rhinoceros) protein is NADH-ubiquinone oxidoreductase chain 3.